The primary structure comprises 39 residues: U2-ctenitoxin-Co1a (39 aa).

In terms of processing, disulfide bonds are present. In terms of tissue distribution, expressed by the venom gland.

It localises to the secreted. Omega-agatoxins are antagonists of voltage-gated calcium channels (Cav). This is U2-ctenitoxin-Co1a from Ctenus ornatus (Brazilian spider).